Consider the following 292-residue polypeptide: NAD kinase (292 aa).

Asp73 (proton acceptor) is an active-site residue. NAD(+) is bound by residues 73–74 (DG), 147–148 (NE), His158, Arg175, Asp177, 188–193 (TAYSLS), and Gln247.

Belongs to the NAD kinase family. A divalent metal cation serves as cofactor.

The protein localises to the cytoplasm. The catalysed reaction is NAD(+) + ATP = ADP + NADP(+) + H(+). Its function is as follows. Involved in the regulation of the intracellular balance of NAD and NADP, and is a key enzyme in the biosynthesis of NADP. Catalyzes specifically the phosphorylation on 2'-hydroxyl of the adenosine moiety of NAD to yield NADP. This Serratia proteamaculans (strain 568) protein is NAD kinase.